The following is a 441-amino-acid chain: Interferon-related developmental regulator 2 (441 aa).

Basic residues predominate over residues 1 to 15 (MPRARKGNALRKGGQ). A disordered region spans residues 1 to 51 (MPRARKGNALRKGGQRRGGGARSSTQADSGSSEDEAASEARSTTSDCPSLL).

It belongs to the IFRD family. In terms of assembly, associates with ribosomes; promoting ribosome inactivation.

Ribosome-binding protein that acts as an inhibitor of mRNA translation by promoting ribosome inactivation. Associates with the P- and E-sites of the ribosome and inserts a C-terminal helix into the mRNA exit channel to preclude translation. This Mus musculus (Mouse) protein is Interferon-related developmental regulator 2.